Consider the following 364-residue polypeptide: DNA replication and repair protein RecF (364 aa).

Glycine 33–threonine 40 contributes to the ATP binding site.

It belongs to the RecF family.

The protein localises to the cytoplasm. The RecF protein is involved in DNA metabolism; it is required for DNA replication and normal SOS inducibility. RecF binds preferentially to single-stranded, linear DNA. It also seems to bind ATP. The sequence is that of DNA replication and repair protein RecF from Rickettsia felis (strain ATCC VR-1525 / URRWXCal2) (Rickettsia azadi).